Consider the following 318-residue polypeptide: Thymidylate synthase (318 aa).

DUMP contacts are provided by residues Arg25 and 180-181 (RR). Residue Cys200 is the Nucleophile of the active site. Residues 220–223 (RSGD), Asn231, and 261–263 (HIY) contribute to the dUMP site. Residue Asp223 coordinates (6R)-5,10-methylene-5,6,7,8-tetrahydrofolate. Residue Ala317 participates in (6R)-5,10-methylene-5,6,7,8-tetrahydrofolate binding.

The protein belongs to the thymidylate synthase family. Bacterial-type ThyA subfamily. In terms of assembly, homodimer.

The protein localises to the cytoplasm. It catalyses the reaction dUMP + (6R)-5,10-methylene-5,6,7,8-tetrahydrofolate = 7,8-dihydrofolate + dTMP. It participates in pyrimidine metabolism; dTTP biosynthesis. In terms of biological role, catalyzes the reductive methylation of 2'-deoxyuridine-5'-monophosphate (dUMP) to 2'-deoxythymidine-5'-monophosphate (dTMP) while utilizing 5,10-methylenetetrahydrofolate (mTHF) as the methyl donor and reductant in the reaction, yielding dihydrofolate (DHF) as a by-product. This enzymatic reaction provides an intracellular de novo source of dTMP, an essential precursor for DNA biosynthesis. This chain is Thymidylate synthase, found in Bacillus cereus (strain ATCC 10987 / NRS 248).